Reading from the N-terminus, the 37-residue chain is Photosystem II reaction center protein T (37 aa).

The helical transmembrane segment at 3 to 23 (ALVYTFLLVGTLGIIFFAIFF) threads the bilayer.

Belongs to the PsbT family. In terms of assembly, PSII is composed of 1 copy each of membrane proteins PsbA, PsbB, PsbC, PsbD, PsbE, PsbF, PsbH, PsbI, PsbJ, PsbK, PsbL, PsbM, PsbT, PsbY, PsbZ, Psb30/Ycf12, at least 3 peripheral proteins of the oxygen-evolving complex and a large number of cofactors. It forms dimeric complexes.

Its subcellular location is the plastid. It is found in the chloroplast thylakoid membrane. Its function is as follows. Found at the monomer-monomer interface of the photosystem II (PS II) dimer, plays a role in assembly and dimerization of PSII. PSII is a light-driven water plastoquinone oxidoreductase, using light energy to abstract electrons from H(2)O, generating a proton gradient subsequently used for ATP formation. This Spirogyra maxima (Green alga) protein is Photosystem II reaction center protein T.